The following is a 496-amino-acid chain: Glycerol kinase (496 aa).

Residue Thr-12 coordinates ADP. 3 residues coordinate ATP: Thr-12, Thr-13, and Ser-14. Residue Thr-12 coordinates sn-glycerol 3-phosphate. Arg-16 contributes to the ADP binding site. Residues Arg-82, Glu-83, and Tyr-134 each contribute to the sn-glycerol 3-phosphate site. Glycerol contacts are provided by Arg-82, Glu-83, and Tyr-134. Residue His-230 is modified to Phosphohistidine; by HPr. Asp-244 provides a ligand contact to sn-glycerol 3-phosphate. Residues Asp-244 and Gln-245 each contribute to the glycerol site. Positions 266 and 309 each coordinate ADP. 4 residues coordinate ATP: Thr-266, Gly-309, Gln-313, and Gly-410. 2 residues coordinate ADP: Gly-410 and Asn-414.

It belongs to the FGGY kinase family. In terms of assembly, homotetramer and homodimer (in equilibrium). The phosphoenolpyruvate-dependent sugar phosphotransferase system (PTS), including enzyme I, and histidine-containing protein (HPr) are required for the phosphorylation, which leads to the activation of the enzyme.

It catalyses the reaction glycerol + ATP = sn-glycerol 3-phosphate + ADP + H(+). Its pathway is polyol metabolism; glycerol degradation via glycerol kinase pathway; sn-glycerol 3-phosphate from glycerol: step 1/1. Its activity is regulated as follows. Activated by phosphorylation and inhibited by fructose 1,6-bisphosphate (FBP). In terms of biological role, key enzyme in the regulation of glycerol uptake and metabolism. Catalyzes the phosphorylation of glycerol to yield sn-glycerol 3-phosphate. The sequence is that of Glycerol kinase from Bacillus thuringiensis subsp. konkukian (strain 97-27).